Here is a 561-residue protein sequence, read N- to C-terminus: Asparagine synthetase [glutamine-hydrolyzing] (561 aa).

Residue Cys2 is the For GATase activity of the active site. Residues 2–191 form the Glutamine amidotransferase type-2 domain; sequence CGIWALFGSD…PGHYEVLDLK (190 aa). Residues 49–53, 75–77, and Asp97 each bind L-glutamine; these read RLAVV and NGE. The Asparagine synthetase domain occupies 213 to 536; that stretch reads HALYDNVEKL…PGRADWLSHY (324 aa). ATP-binding positions include Leu256, Ile288, and 363-364; that span reads SG. At Lys385 the chain carries N6-acetyllysine. The residue at position 545 (Thr545) is a Phosphothreonine. Position 557 is a phosphoserine (Ser557).

It catalyses the reaction L-aspartate + L-glutamine + ATP + H2O = L-asparagine + L-glutamate + AMP + diphosphate + H(+). Its pathway is amino-acid biosynthesis; L-asparagine biosynthesis; L-asparagine from L-aspartate (L-Gln route): step 1/1. In Homo sapiens (Human), this protein is Asparagine synthetase [glutamine-hydrolyzing] (ASNS).